The chain runs to 238 residues: Envelope glycoprotein G (238 aa).

The signal sequence occupies residues 1–24 (MSQGAMRAVVPIIPFLLVLVGVSG). The Virion surface portion of the chain corresponds to 25-189 (VPTNVSSTTQ…SFLTASPALD (165 aa)). N-linked (GlcNAc...) asparagine; by host glycans are attached at residues Asn-28 and Asn-49. 2 stretches are compositionally biased toward polar residues: residues 28 to 42 (NVSS…TTGR) and 49 to 68 (NMTQ…TTPD). Positions 28 to 171 (NVSSTTQPQL…LTSKGRPLVP (144 aa)) are disordered. A compositionally biased stretch (acidic residues) spans 78–88 (LEEEEEEEGAG). Residues 89–100 (DGEHLEGGDGTR) are compositionally biased toward basic and acidic residues. The helical transmembrane segment at 190–210 (TLFVVSTVIHTLSFLCIGAMA) threads the bilayer. Residues 211–238 (THLCGGWSRRGRRTHPSVRYVCLPSERG) are Intravirion-facing.

This sequence belongs to the alphaherpesvirinae glycoprotein G family.

The protein resides in the virion membrane. Chemokine-binding protein that inhibits neutrophils' chemotaxis. This chain is Envelope glycoprotein G (gG), found in Human herpesvirus 1 (strain 17) (HHV-1).